We begin with the raw amino-acid sequence, 86 residues long: Large ribosomal subunit protein eL43 (86 aa).

Residues 38-59 form a C4-type zinc finger; the sequence is CPVCGRKAVRRISTGIWQCQKC.

This sequence belongs to the eukaryotic ribosomal protein eL43 family. It depends on Zn(2+) as a cofactor.

This Thermococcus onnurineus (strain NA1) protein is Large ribosomal subunit protein eL43.